We begin with the raw amino-acid sequence, 407 residues long: Peptidase T (407 aa).

H77 is a Zn(2+) binding site. D79 is an active-site residue. Zn(2+) is bound at residue D140. E174 (proton acceptor) is an active-site residue. Zn(2+) is bound by residues E175, D197, and H379.

This sequence belongs to the peptidase M20B family. Zn(2+) is required as a cofactor.

It is found in the cytoplasm. The catalysed reaction is Release of the N-terminal residue from a tripeptide.. Cleaves the N-terminal amino acid of tripeptides. The polypeptide is Peptidase T (Bacteroides fragilis (strain YCH46)).